Consider the following 466-residue polypeptide: Histone acetyltransferase type B catalytic subunit DDB_G0275159 (466 aa).

In terms of domain architecture, N-acetyltransferase spans 169–366; it reads AVFRYHEKLQ…FRIAIKKRLY (198 aa). Acetyl-CoA contacts are provided by residues 240-242 and 247-253; these read YLI and QRMGHGK. Catalysis depends on glutamate 279, which acts as the Proton donor/acceptor. Positions 372-459 form a coiled coil; sequence DSEQIEKMKQ…LEENYHKTLS (88 aa).

It belongs to the HAT1 family.

The enzyme catalyses L-lysyl-[protein] + acetyl-CoA = N(6)-acetyl-L-lysyl-[protein] + CoA + H(+). In Dictyostelium discoideum (Social amoeba), this protein is Histone acetyltransferase type B catalytic subunit DDB_G0275159.